Consider the following 187-residue polypeptide: uncharacterized protein (187 aa).

This is an uncharacterized protein from Dictyostelium discoideum (Social amoeba).